The sequence spans 476 residues: MAFGKSHRDPYATSVGHLIEKATFAGVQTEDWGQFMHICDIINTTQDGPKDAVKALKKRISKNYNHKEIQLTLSLIDMCVQNCGPSFQSLIVKKEFVKENLVKLLNPRYNLPLDIQNRILNFIKTWSQGFPGGVDVSEVKEVYLDLVKKGVQFPPSEAEAETARQETAQISSNPPTSVPTAPALSSVIAPKNSTVTLVPEQIGKLHSELDMVKMNVRVMSAILMENTPGSENHEDIELLQKLYKTGREMQERIMDLLVVVENEDVTVELIQVNEDLNNAILGYERFTRNQQRILEQNKNQKEATNTTSEPSAPSQDLLDLSPSPRMPRATLGELNTMNNQLSGLNFSLPSSDVTNNLKPSLHPQMNLLALENTEIPPFAQRTSQNLTSSHAYDNFLEHSNSVFLQPVSLQTIAAAPSNQSLPPLPSNHPAMTKSDLQPPNYYEVMEFDPLAPAVTTEAIYEEIDAHQHKGAQNDGD.

Residues 22–154 enclose the VHS domain; it reads ATFAGVQTED…DLVKKGVQFP (133 aa). Positions 155–179 are disordered; the sequence is PSEAEAETARQETAQISSNPPTSVP. The span at 170–179 shows a compositional bias: polar residues; sequence ISSNPPTSVP. S171 carries the post-translational modification Phosphoserine. The GAT domain maps to 200–288; that stretch reads EQIGKLHSEL…AILGYERFTR (89 aa). Positions 298–314 are enriched in polar residues; that stretch reads KNQKEATNTTSEPSAPS. Residues 298–327 are disordered; sequence KNQKEATNTTSEPSAPSQDLLDLSPSPRMP. S314, S321, and S323 each carry phosphoserine. The interval 392–395 is interaction with GRB2; sequence YDNF. Residues 421–425 carry the SH3-binding motif; the sequence is LPPLP. Residues 442 to 445 form an interaction with PIK3R1 region; sequence YEVM. Residue Y460 is modified to Phosphotyrosine. Positions 460–463 match the SH2-binding motif; that stretch reads YEEI.

This sequence belongs to the TOM1 family. As to quaternary structure, interacts with FYN, GRB2 and PIK3R1 when phosphorylated. Interacts with LYN. In terms of processing, phosphorylated on tyrosines by FYN and LYN.

The protein localises to the golgi apparatus. The protein resides in the golgi stack. Its subcellular location is the endosome membrane. It is found in the cytoplasm. It localises to the membrane. Probable adapter protein involved in signaling pathways. Interacts with the SH2 and SH3 domains of various signaling proteins when it is phosphorylated. May promote FYN activation, possibly by disrupting intramolecular SH3-dependent interactions. This is TOM1-like protein 1 (TOM1L1) from Homo sapiens (Human).